Here is a 219-residue protein sequence, read N- to C-terminus: Probable cutinase 4 (219 aa).

The N-terminal stretch at 1 to 17 is a signal peptide; sequence MILPSLLVASLSALAAA. 2 disulfide bridges follow: Cys41-Cys120 and Cys67-Cys81. N-linked (GlcNAc...) asparagine glycosylation occurs at Asn99. The active-site Nucleophile is the Ser131. A disulfide bridge connects residues Cys182 and Cys189. Residue Asp186 is part of the active site. Catalysis depends on His199, which acts as the Proton donor/acceptor.

This sequence belongs to the cutinase family.

It localises to the secreted. The enzyme catalyses cutin + H2O = cutin monomers.. In terms of biological role, catalyzes the hydrolysis of complex carboxylic polyesters found in the cell wall of plants. Degrades cutin, a macromolecule that forms the structure of the plant cuticle. The chain is Probable cutinase 4 from Aspergillus terreus (strain NIH 2624 / FGSC A1156).